A 522-amino-acid chain; its full sequence is TNF receptor-associated factor 6 (522 aa).

An interaction with TAX1BP1 region spans residues 1–354 (MSLLNCENSC…EAQQCNGIYI (354 aa)). Residues 70–109 (CPICLMALREAVQTPCGHRFCKACIIKSIRDAGHKCPVDN) form an RING-type; degenerate zinc finger. Lysine 124 is covalently cross-linked (Glycyl lysine isopeptide (Lys-Gly) (interchain with G-Cter in SUMO); alternate). Residue lysine 124 forms a Glycyl lysine isopeptide (Lys-Gly) (interchain with G-Cter in ubiquitin); alternate linkage. A Glycyl lysine isopeptide (Lys-Gly) (interchain with G-Cter in SUMO) cross-link involves residue lysine 142. 2 TRAF-type zinc fingers span residues 150 to 202 (DHQA…EDKE) and 203 to 259 (IHDQ…NHLA). Residues 288–348 (YVSEVRNFQE…DKVAEIEAQQ (61 aa)) are a coiled coil. Lysine 319 participates in a covalent cross-link: Glycyl lysine isopeptide (Lys-Gly) (interchain with G-Cter in ubiquitin). Residues 350–499 (NGIYIWKIGN…DDTLLVRCEV (150 aa)) enclose the MATH domain. An interaction with TANK region spans residues 355–522 (WKIGNFGMHL…FQPRSTDSGV (168 aa)). Lysine 453 participates in a covalent cross-link: Glycyl lysine isopeptide (Lys-Gly) (interchain with G-Cter in SUMO).

The protein belongs to the TNF receptor-associated factor family. A subfamily. In terms of assembly, homotrimer. Homooligomer. N-terminal region is dimeric while C-terminal region is trimeric; maybe providing a mode of oligomerization. Upon IL1B treatment, forms a complex with PELI1, IRAK1, IRAK4 and MYD88; this complex recruits MAP3K7/TAK1, TAB1 and TAB2 to mediate NF-kappa-B activation. Direct binding of SMAD6 to PELI1 prevents the complex formation and hence negatively regulates IL1R-TLR signaling and eventually NF-kappa-B-mediated gene expression. Binds to TNFRSF5/CD40 and TNFRSF11A/RANK. Associates with NGFR, TNFRSF17, IRAK2, IRAK3, RIPK2, MAP3K1, MAP3K5, MAP3K14, CSK, TRAF, TRAF-interacting protein TRIP and TNF receptor associated protein TDP2. Interacts with IL17R. Interacts with SQSTM1 bridging NTRK1 and NGFR. Forms a ternary complex with SQSTM1 and PRKCZ. Interacts with PELI2 and PELI3. Binds UBE2V1. Interacts with TAX1BP1; this interaction mediates deubiquitination of TRAF6 and inhibition of NF-kappa-B activation. Interacts with ZNF675. Interacts with ARRB1 and ARRB2. Interacts with MAP3K7 and TAB1/MAP3K7IP1; during IL-1 signaling. Interacts with UBE2N. Interacts with TGFBR1, HDAC1 and RANGAP1. Interacts with AKT1, AKT2 and AKT3. Interacts (via TRAF domains) with NUMBL (via C-terminal). Interacts with RBCK1. Interacts with LIMD1 (via LIM domains). Interacts with RSAD2/viperin. Interacts (via C-terminus) with EIF2AK2/PKR (via the kinase catalytic domain). Interacts with ZFAND5. Interacts with IL1RL1. Interacts with TRAFD1. Interacts with AJUBA. Interacts with MAVS/IPS1. Interacts (via TRAF domains) with DYNC2I2 (via WD domains). Interacts with IFIT3 (via N-terminus). Interacts with TICAM2. Interacts with CARD14. Interacts with CD40 and MAP3K8; the interaction is required for ERK activation. Interacts with TICAM1 and this interaction is enhanced in the presence of WDFY1. Interacts with TANK; this interaction increases in response to DNA damage. Interacts with USP10; this interaction increases in response to DNA damage. Interacts with ZC3H12A; this interaction increases in response to DNA damage and is stimulated by TANK. Interacts with WDFY3. Interacts with TRIM13. Interacts with GPS2. Interacts (via C-terminus) with SASH1. Interacts with LRRC19. Interacts with IL17RA and TRAF3IP2. Interacts with TOMM70. Interacts with AMBRA1; interaction is required to mediate 'Lys-63'-linked ubiquitination of ULK1. Interacts with CRBN; this interaction inhibits TLR4-mediated signaling by preventing TRAF6-mediated ubiquitination of ECSIT. Sumoylated on Lys-124, Lys-142 and Lys-453 with SUMO1. Post-translationally, polyubiquitinated on Lys-124 by TRAF3IP2; after cell stimulation with IL17A. Polyubiquitinated; after cell stimulation with IL1B or TGFB. This ligand-induced cell stimulation leads to dimerization/oligomerization of TRAF6 molecules, followed by auto-ubiquitination which involves UBE2N and UBE2V1 and leads to TRAF6 activation. This 'Lys-63' site-specific poly-ubiquitination appears to be associated with the activation of signaling molecules. Endogenous autoubiquitination occurs only for the cytoplasmic form. Deubiquitinated by USP10 in a TANK-dependent manner, leading to the negative regulation of NF-kappa-B signaling upon DNA damage. LRRC19 induces 'Lys-63' ubiquitination. Ubiquitinated at Lys-319 by the SCF(FBXL2) complex, leading to its degradation by the proteasome.

The protein localises to the cytoplasm. Its subcellular location is the cell cortex. It is found in the nucleus. The protein resides in the lipid droplet. It carries out the reaction S-ubiquitinyl-[E2 ubiquitin-conjugating enzyme]-L-cysteine + [acceptor protein]-L-lysine = [E2 ubiquitin-conjugating enzyme]-L-cysteine + N(6)-ubiquitinyl-[acceptor protein]-L-lysine.. The protein operates within protein modification; protein ubiquitination. Its function is as follows. E3 ubiquitin ligase that, together with UBE2N and UBE2V1, mediates the synthesis of 'Lys-63'-linked-polyubiquitin chains conjugated to proteins, such as ECSIT, IKBKG, IRAK1, AKT1 and AKT2. Also mediates ubiquitination of free/unanchored polyubiquitin chain that leads to MAP3K7 activation. Leads to the activation of NF-kappa-B and JUN. Seems to also play a role in dendritic cells (DCs) maturation and/or activation. Represses c-Myb-mediated transactivation, in B-lymphocytes. Adapter protein that seems to play a role in signal transduction initiated via TNF receptor, IL-1 receptor and IL-17 receptor. Regulates osteoclast differentiation by mediating the activation of adapter protein complex 1 (AP-1) and NF-kappa-B, in response to RANK-L stimulation. Together with MAP3K8, mediates CD40 signals that activate ERK in B-cells and macrophages, and thus may play a role in the regulation of immunoglobulin production. Acts as a regulator of the JNK and NF-kappa-B signaling pathways by initiating assembly of heterotypic 'Lys-63'-/'Lys-48'-linked branched ubiquitin chains that are then recognized by TAB2: TRAF6 catalyzes initial 'Lys-63'-linked-polyubiquitin chains that are then branched via 'Lys-48'-linked polyubiquitin by HUWE1. 'Lys-63'-/'Lys-48'-linked branched ubiquitin chains protect 'Lys-63'-linkages from CYLD deubiquitination. Also participates in the TCR signaling by ubiquitinating LAT. The protein is TNF receptor-associated factor 6 (TRAF6) of Macaca mulatta (Rhesus macaque).